The following is a 435-amino-acid chain: NADH-quinone oxidoreductase subunit D (435 aa).

This sequence belongs to the complex I 49 kDa subunit family. NDH-1 is composed of 14 different subunits. Subunits NuoB, C, D, E, F, and G constitute the peripheral sector of the complex.

It is found in the cell inner membrane. It catalyses the reaction a quinone + NADH + 5 H(+)(in) = a quinol + NAD(+) + 4 H(+)(out). In terms of biological role, NDH-1 shuttles electrons from NADH, via FMN and iron-sulfur (Fe-S) centers, to quinones in the respiratory chain. The immediate electron acceptor for the enzyme in this species is believed to be ubiquinone. Couples the redox reaction to proton translocation (for every two electrons transferred, four hydrogen ions are translocated across the cytoplasmic membrane), and thus conserves the redox energy in a proton gradient. This chain is NADH-quinone oxidoreductase subunit D, found in Xylella fastidiosa (strain 9a5c).